A 250-amino-acid polypeptide reads, in one-letter code: 5'-nucleotidase SurE (250 aa).

A divalent metal cation-binding residues include Asp-8, Asp-9, Ser-39, and Asn-91.

It belongs to the SurE nucleotidase family. The cofactor is a divalent metal cation.

The protein localises to the cytoplasm. It carries out the reaction a ribonucleoside 5'-phosphate + H2O = a ribonucleoside + phosphate. Nucleotidase that shows phosphatase activity on nucleoside 5'-monophosphates. This chain is 5'-nucleotidase SurE, found in Leptospira borgpetersenii serovar Hardjo-bovis (strain L550).